Consider the following 210-residue polypeptide: Guanylate kinase (210 aa).

A Guanylate kinase-like domain is found at 5-183; it reads GILFVISAPS…AVEEFKSIIL (179 aa). 12–19 lines the ATP pocket; sequence APSGAGKT.

Belongs to the guanylate kinase family.

It localises to the cytoplasm. It catalyses the reaction GMP + ATP = GDP + ADP. Its function is as follows. Essential for recycling GMP and indirectly, cGMP. The sequence is that of Guanylate kinase from Syntrophotalea carbinolica (strain DSM 2380 / NBRC 103641 / GraBd1) (Pelobacter carbinolicus).